We begin with the raw amino-acid sequence, 508 residues long: Probable zinc metalloprotease MCYG_04217 (508 aa).

Asparagine 111 carries an N-linked (GlcNAc...) asparagine glycan. Residues histidine 182, aspartate 202, and glutamate 238 each contribute to the Zn(2+) site. Asparagine 253 carries an N-linked (GlcNAc...) asparagine glycan. Aspartate 265 contacts Zn(2+). Residues methionine 422–proline 508 form the Fibronectin type-III domain. Asparagine 435 carries N-linked (GlcNAc...) asparagine glycosylation.

Belongs to the peptidase M28 family. M28B subfamily. It depends on Zn(2+) as a cofactor.

The protein localises to the secreted. The chain is Probable zinc metalloprotease MCYG_04217 from Arthroderma otae (strain ATCC MYA-4605 / CBS 113480) (Microsporum canis).